The sequence spans 509 residues: Dihydrolipoyl dehydrogenase, mitochondrial (509 aa).

The transit peptide at 1-35 (MQSWSRVYCSLAKKGHFNRLSHGLQGASSVPLRTY) directs the protein to the mitochondrion. Position 66 is an N6-acetyllysine; alternate (lysine 66). Position 66 is an N6-succinyllysine; alternate (lysine 66). FAD-binding positions include 71–80 (EKNETLGGTC) and lysine 89. Cysteine 80 and cysteine 85 are joined by a disulfide. Residues lysine 104, lysine 122, lysine 132, and lysine 143 each carry the N6-acetyllysine; alternate modification. 4 positions are modified to N6-succinyllysine; alternate: lysine 104, lysine 122, lysine 132, and lysine 143. Glycine 154 contacts FAD. Position 159 is an N6-succinyllysine (lysine 159). Residue 183–185 (TGS) coordinates FAD. NAD(+) is bound by residues 220-227 (GAGVIGVE) and glutamate 243. N6-succinyllysine occurs at positions 273 and 277. Valine 278 provides a ligand contact to NAD(+). 2 positions are modified to phosphoserine: serine 285 and serine 297. Glycine 314 serves as a coordination point for NAD(+). The residue at position 346 (lysine 346) is an N6-acetyllysine. Residues aspartate 355 and 361–364 (MLAH) each bind FAD. Residue lysine 410 is modified to N6-acetyllysine; alternate. Lysine 410 bears the N6-succinyllysine; alternate mark. N6-acetyllysine occurs at positions 417 and 420. Lysine 430 bears the N6-succinyllysine mark. Histidine 487 (proton acceptor) is an active-site residue. Serine 502 carries the post-translational modification Phosphoserine. Lysine 505 carries the post-translational modification N6-acetyllysine; alternate. Lysine 505 is modified (N6-succinyllysine; alternate).

Belongs to the class-I pyridine nucleotide-disulfide oxidoreductase family. Homodimer. Part of the multimeric pyruvate dehydrogenase complex that contains multiple copies of pyruvate dehydrogenase (subunits PDHA (PDHA1 or PDHA2) and PDHB, E1), dihydrolipoamide acetyltransferase (DLAT, E2) and lipoamide dehydrogenase (DLD, E3). These subunits are bound to an inner core composed of about 48 DLAT and 12 PDHX molecules (by non covalent bonds). The 2-oxoglutarate dehydrogenase complex is composed of OGDH (2-oxoglutarate dehydrogenase; E1), DLST (dihydrolipoamide succinyltransferase; E2), DLD (dihydrolipoamide dehydrogenase; E3) and the assembly factor KGD4. It contains multiple copies of the three enzymatic components (E1, E2 and E3). In the nucleus, the 2-oxoglutarate dehydrogenase complex associates with KAT2A. Interacts with PDHX. FAD serves as cofactor. Post-translationally, tyrosine phosphorylated.

The protein localises to the mitochondrion matrix. It is found in the nucleus. It localises to the cell projection. The protein resides in the cilium. Its subcellular location is the flagellum. The protein localises to the cytoplasmic vesicle. It is found in the secretory vesicle. It localises to the acrosome. It catalyses the reaction N(6)-[(R)-dihydrolipoyl]-L-lysyl-[protein] + NAD(+) = N(6)-[(R)-lipoyl]-L-lysyl-[protein] + NADH + H(+). Lipoamide dehydrogenase is a component of the glycine cleavage system as well as an E3 component of three alpha-ketoacid dehydrogenase complexes (pyruvate-, alpha-ketoglutarate-, and branched-chain amino acid-dehydrogenase complex). The 2-oxoglutarate dehydrogenase complex is mainly active in the mitochondrion. A fraction of the 2-oxoglutarate dehydrogenase complex also localizes in the nucleus and is required for lysine succinylation of histones: associates with KAT2A on chromatin and provides succinyl-CoA to histone succinyltransferase KAT2A. In monomeric form may have additional moonlighting function as serine protease. Involved in the hyperactivation of spermatazoa during capacitation and in the spermatazoal acrosome reaction. This is Dihydrolipoyl dehydrogenase, mitochondrial (Dld) from Rattus norvegicus (Rat).